Here is a 172-residue protein sequence, read N- to C-terminus: Ribosome maturation factor RimM (172 aa).

The 74-residue stretch at 95–168 (DDGEFYYHEI…RVDVEILEGL (74 aa)) folds into the PRC barrel domain.

It belongs to the RimM family. As to quaternary structure, binds ribosomal protein uS19.

It localises to the cytoplasm. Functionally, an accessory protein needed during the final step in the assembly of 30S ribosomal subunit, possibly for assembly of the head region. Essential for efficient processing of 16S rRNA. May be needed both before and after RbfA during the maturation of 16S rRNA. It has affinity for free ribosomal 30S subunits but not for 70S ribosomes. The chain is Ribosome maturation factor RimM from Streptococcus pneumoniae (strain P1031).